A 365-amino-acid chain; its full sequence is Chaperone protein DnaJ (365 aa).

The 67-residue stretch at 4-70 (DYYKILGVDR…QKRRMYDQTG (67 aa)) folds into the J domain. The CR-type zinc-finger motif lies at 139 to 220 (GTEKRIKYRR…CNGTGTVVVN (82 aa)). Cys152, Cys155, Cys168, Cys171, Cys194, Cys197, Cys208, and Cys211 together coordinate Zn(2+). 4 CXXCXGXG motif repeats span residues 152-159 (CPDCNGTG), 168-175 (CPTCNGTG), 194-201 (CQTCGGRG), and 208-215 (CPRCNGTG).

It belongs to the DnaJ family. As to quaternary structure, homodimer. Zn(2+) serves as cofactor.

It is found in the cytoplasm. In terms of biological role, participates actively in the response to hyperosmotic and heat shock by preventing the aggregation of stress-denatured proteins and by disaggregating proteins, also in an autonomous, DnaK-independent fashion. Unfolded proteins bind initially to DnaJ; upon interaction with the DnaJ-bound protein, DnaK hydrolyzes its bound ATP, resulting in the formation of a stable complex. GrpE releases ADP from DnaK; ATP binding to DnaK triggers the release of the substrate protein, thus completing the reaction cycle. Several rounds of ATP-dependent interactions between DnaJ, DnaK and GrpE are required for fully efficient folding. Also involved, together with DnaK and GrpE, in the DNA replication of plasmids through activation of initiation proteins. The protein is Chaperone protein DnaJ of Thermoplasma acidophilum (strain ATCC 25905 / DSM 1728 / JCM 9062 / NBRC 15155 / AMRC-C165).